The sequence spans 325 residues: Glutaminase (325 aa).

Residues serine 76, asparagine 125, glutamate 169, asparagine 176, tyrosine 200, tyrosine 252, and valine 270 each coordinate substrate.

Belongs to the glutaminase family. As to quaternary structure, homotetramer.

The catalysed reaction is L-glutamine + H2O = L-glutamate + NH4(+). This chain is Glutaminase, found in Clavibacter michiganensis subsp. michiganensis (strain NCPPB 382).